Reading from the N-terminus, the 394-residue chain is Protein TsgA homolog (394 aa).

The next 12 membrane-spanning stretches (helical) occupy residues 11–31 (WISFFSYALTGAVVIVTGMVL), 51–71 (FLNAGILLAVFLNAWLMEIVP), 76–96 (LIFGFVLMVLAVLGLMNSHSL), 101–121 (LCMFVLGVVSGITMSIGTFLI), 135–155 (LFTDSFFSMAGTLFPIIAAAI), 163–183 (YWVYACIGVIYVAIFILALCF), 205–225 (LGVALLAVAALCYILGQLGFI), 245–265 (SVVGYFWTAYMIGMWAFSAIL), 273–293 (IVTALALASTLLMYWFINTTD), 299–319 (WIIMGLGFFSSAIYTTIITLG), 333–353 (FILTCGTIGTMLTFVVTGPIV), and 362–382 (LATTNSLYAVVFLMCLLLGFV).

The protein belongs to the major facilitator superfamily. TsgA family.

The protein localises to the cell inner membrane. The chain is Protein TsgA homolog from Erwinia tasmaniensis (strain DSM 17950 / CFBP 7177 / CIP 109463 / NCPPB 4357 / Et1/99).